Reading from the N-terminus, the 1291-residue chain is Period circadian protein homolog 1 (1291 aa).

A disordered region spans residues 1 to 134 (MSGPLEGADG…SSEQSARART (134 aa)). Positions 1–151 (MSGPLEGADG…LRELKLRLPP (151 aa)) are interaction with BTRC. Low complexity predominate over residues 48–115 (NSNGSSGNES…AYSLLSASSE (68 aa)). Polar residues predominate over residues 116–132 (QDNPSTSGCSSEQSARA). T121 is subject to Phosphothreonine; by CSNK1E. Phosphoserine; by CSNK1E is present on residues S122 and S126. The Nuclear export signal 1 motif lies at 138–147 (LMTALRELKL). 2 consecutive PAS domains span residues 208–275 (ITSE…PSRL) and 348–414 (YEAP…KILQ). The PAC domain maps to 422–465 (HSPIRFCARNGEYVTMDTSWAGFVHPWSRKVAFVLGRHKVRTAP). The Nuclear export signal 2 signature appears at 489–498 (LSEQIHRLLL). 2 disordered regions span residues 508-544 (GLCGVGPLMSPGPLHSPGSSSDSNGGDAEGPGPPAPV) and 647-698 (TKRK…KEPV). 2 stretches are compositionally biased toward low complexity: residues 513–533 (GPLMSPGPLHSPGSSSDSNGG) and 652–662 (ASSSSYTASSA). A required for phosphorylation by CSNK1E region spans residues 596–815 (ELEVAPVPDQ…GLDTSSVAPS (220 aa)). Phosphoserine occurs at positions 661, 663, and 704. Disordered stretches follow at residues 749 to 772 (GLAPGPAPSPAPSPTVAPDPTPDA), 809 to 873 (TSSV…PPAT), and 938 to 1037 (SQAP…ALSG). Residues 751-769 (APGPAPSPAPSPTVAPDPT) show a composition bias toward pro residues. At S815 the chain carries Phosphoserine. Positions 824–840 (IPPGRRHHCRSKAKRSR) match the Nuclear localization signal motif. Residues 827 to 846 (GRRHHCRSKAKRSRHHHHQT) are compositionally biased toward basic residues. 2 stretches are compositionally biased toward pro residues: residues 859-873 (SPVPSSGPWPPPPAT) and 955-965 (PSLPPPPLSPP). The segment covering 973–985 (FNSRCSSPLQLNL) has biased composition (polar residues). A phosphoserine mark is found at S978 and S979. The Nuclear export signal 3 signature appears at 981–988 (LQLNLLQL). The LXXLL signature appears at 1042–1046 (LELLL). A compositionally biased stretch (low complexity) spans 1051 to 1061 (RSGTGSAASGS). Disordered regions lie at residues 1051–1099 (RSGT…YFGS) and 1207–1291 (SVQD…NSTS). Positions 1062 to 1076 (LGSGLGSGSGSGSHE) are enriched in gly residues. Positions 1077-1094 (GGSTSASITRSSQSSHTS) are enriched in low complexity. A CRY binding domain region spans residues 1148–1291 (SRDAASVLKQ…ALPAEENSTS (144 aa)). Residues 1235-1248 (GEGGGCGVGGGGGD) are compositionally biased toward gly residues. The span at 1253–1267 (AQTQIGAKGSSSQDS) shows a compositional bias: polar residues.

As to quaternary structure, homodimer. Component of the circadian core oscillator, which includes the CRY proteins, CLOCK or NPAS2, BMAL1 or BMAL2, CSNK1D and/or CSNK1E, TIMELESS, and the PER proteins. Interacts directly with TIMELESS. Interacts directly with PER2, PER3, CRY1 and CRY2. Interacts with BMAL1 and CLOCK. Interacts with GPRASP1. Interacts (phosphorylated) with BTRC and FBXW11; the interactions trigger proteasomal degradation. Interacts with NONO and SFPQ. Interacts with WDR5. Interacts with U2AF1L4 (Isoform 3). Interacts with USP2. Interacts with HNF4A. Post-translationally, phosphorylated on serine residues by CSNK1D, CSNK1E and probably also by CSNK1G2. Phosphorylation by CSNK1D or CSNK1E promotes nuclear location of PER proteins as well as ubiquitination and subsequent degradation. May be dephosphorylated by PP1. Ubiquitinated; requires phosphorylation by CSNK1E and interaction with BTRC and FBXW11. Deubiquitinated by USP2. As to expression, in brain, highest expression is observed in the SCN. Highly expressed in the pyramidal cell layer of the piriform cortex, the periventricular part of the caudate-putamen, many thalamic nuclei, and the granular layer of the cerebellar cortex. Weaker expression is detected in most area of the brain, including cortical and non cortical structures. Expression but no oscillations occurs in the glomerular and mitral cell layers of the olfactory bulb, the internal granular layer of the cerebellum, the cornu ammonis and dentate gyrus of the hippocampus, the cerebral and piriform cortices. Expressed in the renal cortex (at protein level). Also found in heart, brain, bladder, lumbar spinal cord, spleen, lung, liver, skeletal muscle and testis.

The protein localises to the nucleus. It localises to the cytoplasm. In terms of biological role, transcriptional repressor which forms a core component of the circadian clock. The circadian clock, an internal time-keeping system, regulates various physiological processes through the generation of approximately 24 hour circadian rhythms in gene expression, which are translated into rhythms in metabolism and behavior. It is derived from the Latin roots 'circa' (about) and 'diem' (day) and acts as an important regulator of a wide array of physiological functions including metabolism, sleep, body temperature, blood pressure, endocrine, immune, cardiovascular, and renal function. Consists of two major components: the central clock, residing in the suprachiasmatic nucleus (SCN) of the brain, and the peripheral clocks that are present in nearly every tissue and organ system. Both the central and peripheral clocks can be reset by environmental cues, also known as Zeitgebers (German for 'timegivers'). The predominant Zeitgeber for the central clock is light, which is sensed by retina and signals directly to the SCN. The central clock entrains the peripheral clocks through neuronal and hormonal signals, body temperature and feeding-related cues, aligning all clocks with the external light/dark cycle. Circadian rhythms allow an organism to achieve temporal homeostasis with its environment at the molecular level by regulating gene expression to create a peak of protein expression once every 24 hours to control when a particular physiological process is most active with respect to the solar day. Transcription and translation of core clock components (CLOCK, NPAS2, BMAL1, BMAL2, PER1, PER2, PER3, CRY1 and CRY2) plays a critical role in rhythm generation, whereas delays imposed by post-translational modifications (PTMs) are important for determining the period (tau) of the rhythms (tau refers to the period of a rhythm and is the length, in time, of one complete cycle). A diurnal rhythm is synchronized with the day/night cycle, while the ultradian and infradian rhythms have a period shorter and longer than 24 hours, respectively. Disruptions in the circadian rhythms contribute to the pathology of cardiovascular diseases, cancer, metabolic syndromes and aging. A transcription/translation feedback loop (TTFL) forms the core of the molecular circadian clock mechanism. Transcription factors, CLOCK or NPAS2 and BMAL1 or BMAL2, form the positive limb of the feedback loop, act in the form of a heterodimer and activate the transcription of core clock genes and clock-controlled genes (involved in key metabolic processes), harboring E-box elements (5'-CACGTG-3') within their promoters. The core clock genes: PER1/2/3 and CRY1/2 which are transcriptional repressors form the negative limb of the feedback loop and interact with the CLOCK|NPAS2-BMAL1|BMAL2 heterodimer inhibiting its activity and thereby negatively regulating their own expression. This heterodimer also activates nuclear receptors NR1D1/2 and RORA/B/G, which form a second feedback loop and which activate and repress BMAL1 transcription, respectively. Regulates circadian target genes expression at post-transcriptional levels, but may not be required for the repression at transcriptional level. Controls PER2 protein decay. Represses CRY2 preventing its repression on CLOCK/BMAL1 target genes such as FXYD5 and SCNN1A in kidney and PPARA in liver. Besides its involvement in the maintenance of the circadian clock, has an important function in the regulation of several processes. Participates in the repression of glucocorticoid receptor NR3C1/GR-induced transcriptional activity by reducing the association of NR3C1/GR to glucocorticoid response elements (GREs) by BMAL1:CLOCK. Plays a role in the modulation of the neuroinflammatory state via the regulation of inflammatory mediators release, such as CCL2 and IL6. In spinal astrocytes, negatively regulates the MAPK14/p38 and MAPK8/JNK MAPK cascades as well as the subsequent activation of NFkappaB. Coordinately regulates the expression of multiple genes that are involved in the regulation of renal sodium reabsorption. Can act as gene expression activator in a gene and tissue specific manner, in kidney enhances WNK1 and SLC12A3 expression in collaboration with CLOCK. Modulates hair follicle cycling. Represses the CLOCK-BMAL1 induced transcription of BHLHE40/DEC1. This Mus musculus (Mouse) protein is Period circadian protein homolog 1 (Per1).